Consider the following 166-residue polypeptide: Small ribosomal subunit protein uS5 (166 aa).

The 64-residue stretch at 11–74 folds into the S5 DRBM domain; the sequence is LEDRVVSINR…EDAKKNLINV (64 aa).

Belongs to the universal ribosomal protein uS5 family. Part of the 30S ribosomal subunit. Contacts proteins S4 and S8.

In terms of biological role, with S4 and S12 plays an important role in translational accuracy. Functionally, located at the back of the 30S subunit body where it stabilizes the conformation of the head with respect to the body. The sequence is that of Small ribosomal subunit protein uS5 from Latilactobacillus sakei subsp. sakei (strain 23K) (Lactobacillus sakei subsp. sakei).